The following is a 541-amino-acid chain: Calcium/calmodulin-dependent protein kinase kinase (541 aa).

The disordered stretch occupies residues 83–106 (AVQEDDEAGPHSSNNLAATMSPNL). Polar residues predominate over residues 93–106 (HSSNNLAATMSPNL). In terms of domain architecture, Protein kinase spans 130–411 (YRLMEEIGQG…LHEVKVHTWV (282 aa)). ATP is bound by residues 136–144 (IGQGSYGIV) and lysine 159. The tract at residues 169–190 (NFACFRQPPPRRNKENAAPSVL) is RP domain. Catalysis depends on aspartate 276, which acts as the Proton acceptor. The tract at residues 437–442 (ENCVRV) is autoinhibitory domain. The calmodulin-binding stretch occupies residues 440–465 (VRVIPRLDTLILVKAMGHRKRFGNPF). The disordered stretch occupies residues 462–512 (GNPFRNKLSAQSSIRDRRKSSSVKDPTYVPPPNSPPATSNNNLNSTKVDRP). Residues 497–507 (PATSNNNLNST) show a composition bias toward low complexity.

It belongs to the protein kinase superfamily. Ser/Thr protein kinase family. Mg(2+) is required as a cofactor. Expressed in head and tail neurons and vulval muscles.

It is found in the cytoplasm. The catalysed reaction is L-seryl-[protein] + ATP = O-phospho-L-seryl-[protein] + ADP + H(+). It catalyses the reaction L-threonyl-[protein] + ATP = O-phospho-L-threonyl-[protein] + ADP + H(+). Activated by Ca(2+)/calmodulin. Binding of calmodulin may relieve intrasteric autoinhibition. Its function is as follows. Calcium/calmodulin-dependent protein kinase which phosphorylates cmk-1. Component of a calcium-triggered signaling cascade involved in CRE-mediated transcriptional activation, probably through cmk-1-mediated crh-1/CREB phosphorylation. Plays a role in salt-avoidance learning behavior via the phosphorylation of cmk-1. This chain is Calcium/calmodulin-dependent protein kinase kinase, found in Caenorhabditis elegans.